The primary structure comprises 433 residues: Oxaloacetate decarboxylase beta chain 2 (433 aa).

10 consecutive transmembrane segments (helical) span residues 16–36 (LGAGQAIMLLVSLLLLWLAIA), 42–62 (LLLLPIGFGGLLSNIPEAGMA), 122–142 (VLALFYKVAIGSGVAPLVIFM), 168–188 (FGIFATVLGALTLNYFGLIAF), 190–210 (LPQAAAIGIIGGADGPTAIYL), 216–236 (PELLGAIAVAAYSYMALVPLI), 266–286 (ILFPVVLLLLVALLLPDAAPL), 311–331 (NGLINIVTIFLGLSVGAKLVA), 340–360 (LGILLLGVIAFGIGTAAGVLM), and 413–433 (VAGVIGSAIAAGVMLKYVLAM).

The protein belongs to the GcdB/MmdB/OadB family. As to quaternary structure, heterotrimer of an alpha, a beta and a gamma subunit. It depends on Na(+) as a cofactor.

It is found in the cell membrane. It carries out the reaction oxaloacetate + 2 Na(+)(in) + H(+) = pyruvate + 2 Na(+)(out) + CO2. Its function is as follows. Catalyzes the decarboxylation of oxaloacetate coupled to Na(+) translocation. This Salmonella typhi protein is Oxaloacetate decarboxylase beta chain 2 (oadB2).